We begin with the raw amino-acid sequence, 98 residues long: NADH-ubiquinone oxidoreductase chain 4L (98 aa).

The next 3 membrane-spanning stretches (helical) occupy residues 1-21, 29-49, and 61-81; these read MSMV…GLLM, SLLC…MVVL, and IILL…LVMV.

This sequence belongs to the complex I subunit 4L family. Core subunit of respiratory chain NADH dehydrogenase (Complex I) which is composed of 45 different subunits.

It localises to the mitochondrion inner membrane. It catalyses the reaction a ubiquinone + NADH + 5 H(+)(in) = a ubiquinol + NAD(+) + 4 H(+)(out). Functionally, core subunit of the mitochondrial membrane respiratory chain NADH dehydrogenase (Complex I) which catalyzes electron transfer from NADH through the respiratory chain, using ubiquinone as an electron acceptor. Part of the enzyme membrane arm which is embedded in the lipid bilayer and involved in proton translocation. The sequence is that of NADH-ubiquinone oxidoreductase chain 4L (MT-ND4L) from Acinonyx jubatus (Cheetah).